A 196-amino-acid polypeptide reads, in one-letter code: Elongation factor Ts (196 aa).

The interval 80–83 (TDFV) is involved in Mg(2+) ion dislocation from EF-Tu.

Belongs to the EF-Ts family. Heterotetramer composed of two EF-Ts.EF-Tu dimer complexes.

The protein resides in the cytoplasm. Its function is as follows. Associates with the EF-Tu.GDP complex and induces the exchange of GDP to GTP. It remains bound to the aminoacyl-tRNA.EF-Tu.GTP complex up to the GTP hydrolysis stage on the ribosome. This chain is Elongation factor Ts (tsf), found in Thermus thermophilus (strain ATCC 27634 / DSM 579 / HB8).